Consider the following 131-residue polypeptide: MSEIPGDLKFLKSHEWARVEGNGRVTVGISDHAQGLLGDLVYVELPAVGDTVQAGNGAAVVESVKAASDVYSPVTGTVVEVNASLSDKPETINEDAYGEGWIFVVEIDDKEQLNELLAPDDYAELLEDDAH.

In terms of domain architecture, Lipoyl-binding spans 24–106; that stretch reads RVTVGISDHA…YGEGWIFVVE (83 aa). An N6-lipoyllysine modification is found at Lys-65.

The protein belongs to the GcvH family. As to quaternary structure, the glycine cleavage system is composed of four proteins: P, T, L and H. (R)-lipoate is required as a cofactor.

In terms of biological role, the glycine cleavage system catalyzes the degradation of glycine. The H protein shuttles the methylamine group of glycine from the P protein to the T protein. The protein is Glycine cleavage system H protein of Xanthomonas campestris pv. campestris (strain 8004).